We begin with the raw amino-acid sequence, 359 residues long: Heat-inducible transcription repressor HrcA (359 aa).

This sequence belongs to the HrcA family.

Its function is as follows. Negative regulator of class I heat shock genes (grpE-dnaK-dnaJ and groELS operons). Prevents heat-shock induction of these operons. This is Heat-inducible transcription repressor HrcA from Roseiflexus castenholzii (strain DSM 13941 / HLO8).